The sequence spans 368 residues: Proteinase-activated receptor 3 (368 aa).

The N-terminal stretch at 1 to 21 is a signal peptide; that stretch reads MEMKVLILVGVRLLFLPTTVC. A propeptide spans 22–37 (removed for receptor activation); sequence QSGMKHVSDNSALTAE. Residues 38–93 lie on the Extracellular side of the membrane; the sequence is SFNGNEHSFEEFPLSDIEGWTGATTTIKAKCPEESITTLHVNNATMGYLRSSLSTK. An N-linked (GlcNAc...) asparagine glycan is attached at asparagine 80. A helical transmembrane segment spans residues 94 to 114; that stretch reads VIPAIYILVFVIGVPANIVTL. The Cytoplasmic portion of the chain corresponds to 115-123; the sequence is WKLSSRTKS. Residues 124 to 144 traverse the membrane as a helical segment; the sequence is ICLVIFHTNLAIADLLFCVTL. At 145–166 the chain is on the extracellular side; that stretch reads PFKIAYHLNGNDWVFGEVMCRV. A disulfide bridge links cysteine 164 with cysteine 243. Residues 167-187 form a helical membrane-spanning segment; that stretch reads TTVAFYGNMYCAILILTCMGI. Topologically, residues 188–208 are cytoplasmic; that stretch reads NRYLATVHPFTYRKLPKRNFT. A helical transmembrane segment spans residues 209–229; that stretch reads LLMCGVVWVMVVLYMLPLAIL. At 230-257 the chain is on the extracellular side; it reads KQEYHLVQPGITTCHDVHDTCESPLPFQ. Residues 258 to 278 traverse the membrane as a helical segment; the sequence is FYYFVSLAFFGFLIPFVVSVF. Topologically, residues 279-300 are cytoplasmic; the sequence is CYTTLIHKLNAQDRKWLRYIKA. A helical membrane pass occupies residues 301-321; sequence VLLILVIFTICFAPTNIILII. Residues 322 to 338 are Extracellular-facing; the sequence is HHANYYYSNTDSLYFMY. A helical transmembrane segment spans residues 339-359; sequence LIALCLGSLNSCLDPFLYFIM. The Cytoplasmic portion of the chain corresponds to 360–368; sequence SKIVDQLTS.

It belongs to the G-protein coupled receptor 1 family. As to quaternary structure, interacts with INSC/inscuteable and GPSM2. Post-translationally, a proteolytic cleavage generates a new N-terminus that functions as a tethered ligand.

The protein resides in the cell membrane. In terms of biological role, receptor for activated thrombin coupled to G proteins that stimulate phosphoinositide hydrolysis. This chain is Proteinase-activated receptor 3 (F2rl2), found in Rattus norvegicus (Rat).